Here is a 332-residue protein sequence, read N- to C-terminus: Formamidase (332 aa).

Residues 14-259 (FLTALIQYPV…WEIVTAEVYP (246 aa)) form the CN hydrolase domain. The active-site Proton acceptor is Glu-60. Lys-132 functions as the Proton donor in the catalytic mechanism. Cys-165 acts as the Nucleophile in catalysis.

This sequence belongs to the carbon-nitrogen hydrolase superfamily. Aliphatic amidase family.

It catalyses the reaction formamide + H2O = formate + NH4(+). Is an aliphatic amidase with a restricted substrate specificity, as it only hydrolyzes formamide. The protein is Formamidase of Bacillus cereus (strain G9842).